The sequence spans 1036 residues: Lethal(2) giant larvae protein homolog 1 (1036 aa).

10 WD repeats span residues 38-71, 78-119, 139-175, 199-233, 239-271, 289-331, 339-373, 395-473, 517-592, and 601-662; these read SALA…FTGL, VTQM…GLSF, VTVV…GQTL, SLQG…EHVF, LESL…GSPP, AINK…ETLV, VIDF…VLDL, TCSA…YKLS, QKVA…RMLI, and TAVT…LRQS. Ser-662 is subject to Phosphoserine. Basic residues predominate over residues 667–677; sequence RKSRVSGKKRT. The disordered stretch occupies residues 667 to 688; sequence RKSRVSGKKRTPAASSKLQEAN. The segment covering 679-688 has biased composition (polar residues); sequence AASSKLQEAN. WD repeat units lie at residues 722–782, 791–843, 848–901, and 915–938; these read VRCL…KEVQ, AIAV…VSAK, LTAH…VHYS, and VFTR…SLSA. Phosphothreonine is present on Thr-957. Ser-964, Ser-982, and Ser-989 each carry phosphoserine. The segment at 980–1002 is disordered; it reads PESCEGSPSSAHSKRADTMEPPE.

This sequence belongs to the WD repeat L(2)GL family. In terms of assembly, associated with nonmuscle myosin II heavy chain. Interacts with PRKCI/aPKC, PARD6B/Par-6 and PARD6A. Interacts with STX4A. Interacts with RAB10 (GDP-bound form); the interaction is direct and promotes RAB10 association with membranes and activation through competition with the Rab inhibitor GDI1. Interacts with DCAF1. Phosphorylated by PRKCI. As to expression, widely expressed. Expressed in brain, ovary, testis, with moderate expression in lever, uterus, lung and kidney.

It localises to the early endosome membrane. Its subcellular location is the golgi apparatus. The protein resides in the trans-Golgi network membrane. It is found in the cell projection. The protein localises to the axon. It localises to the golgi apparatus membrane. Its subcellular location is the cytoplasm. The protein resides in the cytoskeleton. Its function is as follows. Cortical cytoskeleton protein found in a complex involved in maintaining cell polarity and epithelial integrity. Involved in the regulation of mitotic spindle orientation, proliferation, differentiation and tissue organization of neuroepithelial cells. Involved in axonogenesis through RAB10 activation thereby regulating vesicular membrane trafficking toward the axonal plasma membrane. The chain is Lethal(2) giant larvae protein homolog 1 (LLGL1) from Bos taurus (Bovine).